A 257-amino-acid chain; its full sequence is Probable pectate lyase G (257 aa).

The first 24 residues, 1 to 24 (MPVLSKLLPTLTLTLPLLAGPCLA), serve as a signal peptide directing secretion.

This sequence belongs to the polysaccharide lyase 3 family. Ca(2+) serves as cofactor.

It is found in the secreted. It catalyses the reaction Eliminative cleavage of (1-&gt;4)-alpha-D-galacturonan to give oligosaccharides with 4-deoxy-alpha-D-galact-4-enuronosyl groups at their non-reducing ends.. Its function is as follows. Pectinolytic enzyme consist of four classes of enzymes: pectin lyase, polygalacturonase, pectin methylesterase and rhamnogalacturonase. Among pectinolytic enzymes, pectin lyase is the most important in depolymerization of pectin, since it cleaves internal glycosidic bonds of highly methylated pectins. Favors pectate, the anion, over pectin, the methyl ester. The chain is Probable pectate lyase G (plyG) from Emericella nidulans (strain FGSC A4 / ATCC 38163 / CBS 112.46 / NRRL 194 / M139) (Aspergillus nidulans).